Reading from the N-terminus, the 228-residue chain is MTEYLLSAGICMAIVSILLIGMAISNVSKGQYAKRFFFFATSCLVLTLVVVSSLSSSANASQTDNGVNRSGSEDPTVYSATSTKKLHKEPATLIKAIDGDTVKLMYKGQPMTFRLLLVDTPETKHPKKGVEKYGPEASAFTKKMVENANKIEVEFDKGQRTDKYGRGLAYIYADGKMVNEALVRQGLAKVAYVYKPNNTHEQLLRKSEAQAKKEKLNIWSEDNADSGQ.

The first 23 residues, 1–23, serve as a signal peptide directing secretion; it reads MTEYLLSAGICMAIVSILLIGMA. Residues 24-60 constitute a propeptide that is removed on maturation; sequence ISNVSKGQYAKRFFFFATSCLVLTLVVVSSLSSSANA. The segment covering 58–70 has biased composition (polar residues); that stretch reads ANASQTDNGVNRS. Positions 58 to 83 are disordered; that stretch reads ANASQTDNGVNRSGSEDPTVYSATST. Asp-100 provides a ligand contact to Ca(2+). The active site involves Arg-114. Ca(2+)-binding residues include Asp-119 and Thr-120. Active-site residues include Glu-122 and Arg-166.

The protein belongs to the thermonuclease family. Ca(2+) serves as cofactor.

Its subcellular location is the secreted. It carries out the reaction Endonucleolytic cleavage to nucleoside 3'-phosphates and 3'-phosphooligonucleotide end-products.. Functionally, enzyme that catalyzes the hydrolysis of both DNA and RNA at the 5' position of the phosphodiester bond. This chain is Thermonuclease (nuc), found in Staphylococcus aureus (strain Mu50 / ATCC 700699).